We begin with the raw amino-acid sequence, 495 residues long: ATP synthase subunit beta, chloroplastic (495 aa).

Residue 172 to 179 (GGAGVGKT) participates in ATP binding.

The protein belongs to the ATPase alpha/beta chains family. F-type ATPases have 2 components, CF(1) - the catalytic core - and CF(0) - the membrane proton channel. CF(1) has five subunits: alpha(3), beta(3), gamma(1), delta(1), epsilon(1). CF(0) has four main subunits: a(1), b(1), b'(1) and c(9-12).

It is found in the plastid. It localises to the chloroplast thylakoid membrane. It catalyses the reaction ATP + H2O + 4 H(+)(in) = ADP + phosphate + 5 H(+)(out). Functionally, produces ATP from ADP in the presence of a proton gradient across the membrane. The catalytic sites are hosted primarily by the beta subunits. In Brimeura amethystina (Spanish hyacinth), this protein is ATP synthase subunit beta, chloroplastic.